Here is a 477-residue protein sequence, read N- to C-terminus: Pentatricopeptide repeat-containing protein At1g55630 (477 aa).

PPR repeat units follow at residues 151–185 (TANC…GYPT), 186–220 (TACT…NYRP), 221–255 (YKHS…GFTP), 256–290 (DVLT…GFSP), 291–325 (DLYT…GVEP), 326–360 (GVIH…GCTP), 361–395 (DVVC…GQLP), 396–430 (NVFT…GCNP), and 431–465 (NFVV…GHYV).

The protein belongs to the PPR family. P subfamily.

This is Pentatricopeptide repeat-containing protein At1g55630 from Arabidopsis thaliana (Mouse-ear cress).